The primary structure comprises 521 residues: Citrinin biosynthesis cluster MFS transporter ctnC (521 aa).

The interval 1–29 (MKEEIDAPVSTDASGTDLENARDQPSGEK) is disordered. The next 8 membrane-spanning stretches (helical) occupy residues 58–78 (SLIT…SSVF), 95–115 (VMTL…LVWG), 124–144 (LKPL…VAVA), 155–175 (FFLG…LADF), 182–202 (AIAI…GPIM), 237–257 (WTAW…FLTL), 313–333 (ILVC…LFFV), and 349–369 (GIAA…CLLV). Asn383 is a glycosylation site (N-linked (GlcNAc...) asparagine). A run of 4 helical transmembrane segments spans residues 392–412 (LPPM…FGWT), 417–437 (ISWA…LMIW), 465–485 (AVSA…GVDW), and 489–509 (LLGF…FYGA).

Belongs to the major facilitator superfamily. CAR1 family.

The protein resides in the membrane. Its function is as follows. MFS transporter; part of the gene cluster that mediates the biosynthesis the mycotoxin citrinin, a hepato-nephrotoxic compound to humans due to inhibition of respiration complex III. This is Citrinin biosynthesis cluster MFS transporter ctnC (ctnC) from Monascus purpureus (Red mold).